The following is a 668-amino-acid chain: Endoplasmic reticulum oxidoreductin-1 (668 aa).

The N-terminal stretch at 1-22 is a signal peptide; that stretch reads MKPASRLFYLSLFALWSPEAQC. 4 disulfides stabilise this stretch: C79–C413, C89–C94, C150–C352, and C416–C419. The interval 116–142 is disordered; the sequence is KLEGPRAKHPGKSVQKEEPKRPLQGKL. Residues R186, T188, W199, S282, and H285 each coordinate FAD. N-linked (GlcNAc...) asparagine glycosylation is found at N298 and N307. R314 contacts FAD. An N-linked (GlcNAc...) asparagine glycan is attached at N406. C416 acts as the Nucleophile in catalysis. C419 is an active-site residue. Residue N443 is glycosylated (N-linked (GlcNAc...) asparagine). 2 disordered regions span residues 488–519 and 554–597; these read VEES…DRAK and GVTP…DPNF. Polar residues predominate over residues 494–509; it reads GQQPQSHEQIEGSENS. Acidic residues predominate over residues 570 to 581; the sequence is DNNDDDDDDDEF.

Belongs to the EROs family. As to quaternary structure, may function both as a monomer and a homodimer. The cofactor is FAD.

The protein localises to the endoplasmic reticulum membrane. Functionally, essential oxidoreductase that oxidizes proteins in the endoplasmic reticulum to produce disulfide bonds. Acts by oxidizing directly pdi1 isomerase through a direct disulfide exchange. Does not act as a direct oxidant of folding substrate, but relies on pdi1 to transfer oxidizing equivalent. Does not oxidize all pdi related proteins, suggesting that it can discriminate between pdi1 and related proteins. Its reoxidation probably involves electron transfer to molecular oxygen via FAD. Acts independently of glutathione. May be responsible for a significant proportion of reactive oxygen species (ROS) in the cell, thereby being a source of oxidative stress. The sequence is that of Endoplasmic reticulum oxidoreductin-1 (ero-1) from Neurospora crassa (strain ATCC 24698 / 74-OR23-1A / CBS 708.71 / DSM 1257 / FGSC 987).